A 480-amino-acid polypeptide reads, in one-letter code: Methylenetetrahydrofolate--tRNA-(uracil-5-)-methyltransferase TrmFO (480 aa).

15 to 20 contributes to the FAD binding site; that stretch reads GGGLAG.

It belongs to the MnmG family. TrmFO subfamily. FAD serves as cofactor.

The protein resides in the cytoplasm. The enzyme catalyses uridine(54) in tRNA + (6R)-5,10-methylene-5,6,7,8-tetrahydrofolate + NADH + H(+) = 5-methyluridine(54) in tRNA + (6S)-5,6,7,8-tetrahydrofolate + NAD(+). The catalysed reaction is uridine(54) in tRNA + (6R)-5,10-methylene-5,6,7,8-tetrahydrofolate + NADPH + H(+) = 5-methyluridine(54) in tRNA + (6S)-5,6,7,8-tetrahydrofolate + NADP(+). Its function is as follows. Catalyzes the folate-dependent formation of 5-methyl-uridine at position 54 (M-5-U54) in all tRNAs. The protein is Methylenetetrahydrofolate--tRNA-(uracil-5-)-methyltransferase TrmFO of Caulobacter sp. (strain K31).